We begin with the raw amino-acid sequence, 468 residues long: Cysteine--tRNA ligase (468 aa).

Position 33 (cysteine 33) interacts with Zn(2+). The short motif at 35-45 (ATVQGLPHIGH) is the 'HIGH' region element. Zn(2+)-binding residues include cysteine 211, histidine 236, and glutamate 240. A 'KMSKS' region motif is present at residues 267–271 (KMSKS). Lysine 270 serves as a coordination point for ATP.

The protein belongs to the class-I aminoacyl-tRNA synthetase family. As to quaternary structure, monomer. Requires Zn(2+) as cofactor.

It localises to the cytoplasm. It carries out the reaction tRNA(Cys) + L-cysteine + ATP = L-cysteinyl-tRNA(Cys) + AMP + diphosphate. The protein is Cysteine--tRNA ligase of Mycobacterium avium (strain 104).